The chain runs to 333 residues: Probable cytosolic iron-sulfur protein assembly protein 1 (333 aa).

WD repeat units lie at residues L12–E50, A55–E94, G107–E146, E153–C192, G197–E238, A250–E288, and Y298–N333.

This sequence belongs to the WD repeat CIA1 family. Interacts with NAR1.

The protein resides in the cytoplasm. It is found in the nucleus. Essential component of the cytosolic iron-sulfur (Fe/S) protein assembly machinery. Required for the maturation of extramitochondrial Fe/S proteins. The sequence is that of Probable cytosolic iron-sulfur protein assembly protein 1 from Kluyveromyces lactis (strain ATCC 8585 / CBS 2359 / DSM 70799 / NBRC 1267 / NRRL Y-1140 / WM37) (Yeast).